We begin with the raw amino-acid sequence, 153 residues long: Large ribosomal subunit protein uL22 (153 aa).

The protein belongs to the universal ribosomal protein uL22 family. In terms of assembly, part of the 50S ribosomal subunit.

Its function is as follows. This protein binds specifically to 23S rRNA. It makes multiple contacts with different domains of the 23S rRNA in the assembled 50S subunit and ribosome. In terms of biological role, the globular domain of the protein is located near the polypeptide exit tunnel on the outside of the subunit, while an extended beta-hairpin is found that lines the wall of the exit tunnel in the center of the 70S ribosome. The chain is Large ribosomal subunit protein uL22 from Methanococcus aeolicus (strain ATCC BAA-1280 / DSM 17508 / OCM 812 / Nankai-3).